Here is a 286-residue protein sequence, read N- to C-terminus: Translocon-associated protein subunit alpha (286 aa).

The first 18 residues, 1 to 18, serve as a signal peptide directing secretion; sequence MRLLPRLLLLLLLVFPAT. Over 19–207 the chain is Lumenal; the sequence is VLFRGGPRGL…EREDGLDGET (189 aa). The span at 39 to 75 shows a compositional bias: acidic residues; it reads EETVEDSIIEDEDDEAEVEEDEPTDLVEDKEEEDVSG. Residues 39-83 are disordered; the sequence is EETVEDSIIEDEDDEAEVEEDEPTDLVEDKEEEDVSGEPEASPSA. N-linked (GlcNAc...) asparagine glycans are attached at residues Asn-136 and Asn-191. A helical transmembrane segment spans residues 208–228; sequence IFMYMFLAGLGLLVIVGLHQL. Over 229–286 the chain is Cytoplasmic; that stretch reads LESRKRKRPIQKVEMGTSSQNDVDMSWIPQETLNQINKASPRRLPRKRAQKRSVGSDE. The residue at position 247 (Ser-247) is a Phosphoserine. The residue at position 260 (Thr-260) is a Phosphothreonine. Residues 261 to 286 are disordered; the sequence is LNQINKASPRRLPRKRAQKRSVGSDE. Position 268 is a phosphoserine (Ser-268). Residues 268–279 show a composition bias toward basic residues; that stretch reads SPRRLPRKRAQK.

This sequence belongs to the TRAP-alpha family. As to quaternary structure, heterotetramer of TRAP-alpha, TRAP-beta, TRAP-delta and TRAP-gamma. Interacts with palmitoylated calnexin (CALX), the interaction is required for efficient folding of glycosylated proteins.

It localises to the endoplasmic reticulum membrane. TRAP proteins are part of a complex whose function is to bind calcium to the ER membrane and thereby regulate the retention of ER resident proteins. May be involved in the recycling of the translocation apparatus after completion of the translocation process or may function as a membrane-bound chaperone facilitating folding of translocated proteins. The protein is Translocon-associated protein subunit alpha (SSR1) of Homo sapiens (Human).